The chain runs to 2316 residues: Receptor-type tyrosine-protein phosphatase zeta (2316 aa).

The signal sequence occupies residues 1 to 24 (MRILQSFLACVQLLCVCRLDWAYG). Residues 25–1637 (YYRQQRKLVE…LAEGLESEKK (1613 aa)) lie on the Extracellular side of the membrane. Residues 36-300 (IGWSYTGALN…KFSRQVFSSY (265 aa)) enclose the Alpha-carbonic anhydrase domain. Disulfide bonds link cysteine 56–cysteine 240 and cysteine 133–cysteine 264. N-linked (GlcNAc...) asparagine glycosylation is found at asparagine 105, asparagine 134, asparagine 223, asparagine 232, asparagine 324, asparagine 381, and asparagine 497. Positions 314-413 (EPENVQADPE…LIVDMPTEDA (100 aa)) constitute a Fibronectin type-III domain. Disordered regions lie at residues 433 to 499 (YGKG…LNTS) and 518 to 537 (LPSQ…TSAS). Asparagine 552 carries an N-linked (GlcNAc...) asparagine glycan. 2 positions are modified to phosphoserine: serine 572 and serine 576. Disordered regions lie at residues 586–624 (KLDS…TPEA) and 636–720 (RNAL…EMPH). The span at 592–602 (DDSSGSSPASS) shows a compositional bias: low complexity. Serine 595 carries an O-linked (Xyl...) (chondroitin sulfate) serine glycan. Positions 603 to 621 (TVPFSTDNLSHGYTSSSDT) are enriched in polar residues. Asparagine 610 carries an N-linked (GlcNAc...) asparagine glycan. The residue at position 645 (serine 645) is a Phosphoserine; alternate. Residue serine 645 is glycosylated (O-linked (Xyl...) (chondroitin sulfate) serine; alternate). Serine 647 carries the post-translational modification Phosphoserine. Over residues 666–675 (TDLTTQSETG) the composition is skewed to polar residues. N-linked (GlcNAc...) asparagine glycosylation is present at asparagine 685. Residues 699-711 (ETFSPDATASRGP) are compositionally biased toward polar residues. Asparagine 786 is a glycosylation site (N-linked (GlcNAc...) asparagine). Serine 1005 carries an O-linked (Xyl...) (chondroitin sulfate) serine glycan. Residues asparagine 1025 and asparagine 1058 are each glycosylated (N-linked (GlcNAc...) asparagine). Disordered regions lie at residues 1141-1172 (QASG…SHPS), 1204-1228 (KTAL…SSSS), 1401-1521 (LLPS…DGRE), and 1545-1622 (TSDE…NSSH). A compositionally biased stretch (polar residues) spans 1152–1172 (LSTNSEPALSDTASSEVSHPS). Residues 1401–1413 (LLPSKATSKPTHS) show a composition bias toward polar residues. Residues 1425-1439 (EDGDDYDDDDYDDID) are compositionally biased toward acidic residues. N-linked (GlcNAc...) asparagine glycosylation occurs at asparagine 1463. The segment covering 1464–1478 (DSDTQESSLVDQSDP) has biased composition (polar residues). O-linked (Xyl...) (chondroitin sulfate) serine glycans are attached at residues serine 1550 and serine 1552. 2 stretches are compositionally biased toward polar residues: residues 1555 to 1569 (GTSD…STDF) and 1595 to 1609 (PRSS…HSGV). N-linked (GlcNAc...) asparagine glycosylation is present at asparagine 1563. The segment covering 1610–1621 (SNSSEAEASNSS) has biased composition (low complexity). N-linked (GlcNAc...) asparagine glycans are attached at residues asparagine 1611 and asparagine 1619. A helical transmembrane segment spans residues 1638 to 1663 (AVIPLVIVSALTFICLVVLVGILIYW). Over 1664 to 2316 (RKCFQTAHFY…NIAESLESLV (653 aa)) the chain is Cytoplasmic. Phosphothreonine is present on residues threonine 1685 and threonine 1688. 2 Tyrosine-protein phosphatase domains span residues 1718 to 1993 (FTEE…LVEA) and 2024 to 2283 (LEKQ…VLSL). Residues aspartate 1902, 1934–1940 (CSAGVGR), and glutamine 1978 contribute to the substrate site. The active-site Phosphocysteine intermediate is cysteine 1934. Phosphoserine is present on serine 2056.

This sequence belongs to the protein-tyrosine phosphatase family. Receptor class 5 subfamily. As to quaternary structure, interacts with tenascin. Interacts with N-CAM and NG-CAM. The carbonic-anhydrase like domain interacts with CNTN1 (contactin). Interacts with PTN. Interaction with PTN promotes formation of homooligomers; oligomerization impairs phosphatase activity. Interacts (via chondroitin sulfate chains) with MDK (via C-terminal); this interaction is inhibited by PTN; this interaction promotes neuronal migration. Nervous tissue specific.

It localises to the cell membrane. The protein resides in the secreted. It catalyses the reaction O-phospho-L-tyrosyl-[protein] + H2O = L-tyrosyl-[protein] + phosphate. Its function is as follows. Protein tyrosine phosphatase that negatively regulates oligodendrocyte precursor proliferation in the embryonic spinal cord. Required for normal differentiation of the precursor cells into mature, fully myelinating oligodendrocytes. May play a role in protecting oligondendrocytes against apoptosis. May play a role in the establishment of contextual memory, probably via the dephosphorylation of proteins that are part of important signaling cascades. In terms of biological role, isoform 3 (phosphacan), previously designated 3F8 chondroitin sulfate proteoglycan or 3H1 keratan sulfate proteoglycan depending on the glycosylation status, is a soluble nervous tissue-specific proteoglycan. It is synthesized by glia and binds to neurons and to the neural cell adhesion molecules tenascin, N-CAM or NG-CAM but not to laminin and fibronectin. Phosphacan acts as a potent inhibitor of cell adhesion and neurite outgrowth. This Rattus norvegicus (Rat) protein is Receptor-type tyrosine-protein phosphatase zeta (Ptprz1).